The chain runs to 204 residues: Colicin-A (204 aa).

2 helical membrane-spanning segments follow: residues 139–161 (SWVLSGIASSVALGIFSATLGAY) and 165–187 (LGVPAIAVGIAGILLAAVVGALI).

This sequence belongs to the channel forming colicin family.

It is found in the cell membrane. This colicin is a channel-forming colicin. This class of transmembrane toxins depolarize the cytoplasmic membrane, leading to dissipation of cellular energy. Its function is as follows. Colicins are polypeptide toxins produced by and active against E.coli and closely related bacteria. This chain is Colicin-A (caa), found in Escherichia coli.